Consider the following 505-residue polypeptide: Activin receptor type-1B (505 aa).

An N-terminal signal peptide occupies residues 1-23 (MAESAGASSFFPLVVLLLAGSGG). The Extracellular portion of the chain corresponds to 24–126 (SGPRGIQALL…EHPSMWGPVE (103 aa)). Asn43 carries an N-linked (GlcNAc...) asparagine glycan. Residues 127–149 (LVGIIAGPVFLLFLIIIIVFLVI) form a helical membrane-spanning segment. The Cytoplasmic segment spans residues 150–505 (NYHQRVYHNR…QLSVQEDVKI (356 aa)). A GS domain is found at 177–206 (KTLQDLVYDLSTSGSGSGLPLFVQRTVART). The Protein kinase domain maps to 207 to 497 (IVLQEIIGKG…LRIKKTLSQL (291 aa)). ATP contacts are provided by residues 213 to 221 (IGKGRFGEV) and Lys234. Asp335 functions as the Proton acceptor in the catalytic mechanism. Tyr380 carries the phosphotyrosine modification.

Belongs to the protein kinase superfamily. TKL Ser/Thr protein kinase family. TGFB receptor subfamily. As to quaternary structure, forms an activin receptor complex with activin receptor type-2 (ACVR2A or ACVR2B). Part of a complex consisting of MAGI2/ARIP1, ACVR2A, ACVR1B and SMAD3. Interacts with SMAD2 and SMAD3. Interacts with SMAD7. Interacts with FKBP1A. Interacts with IGSF1. Interacts with CRIPTO. Interacts with TDP2. Interacts with TSC22D1/TSC-22. Mg(2+) is required as a cofactor. Requires Mn(2+) as cofactor. Autophosphorylated. Phosphorylated by activin receptor type-2 (ACVR2A or ACVR2B) in response to activin-binding at serine and threonine residues in the GS domain. Phosphorylation of ACVR1B by activin receptor type-2 regulates association with SMAD7. In terms of processing, ubiquitinated. Level of ubiquitination is regulated by the SMAD7-SMURF1 complex. Post-translationally, ubiquitinated. Urogenital ridge, testis, ovary, brain and lungs.

Its subcellular location is the cell membrane. It carries out the reaction L-threonyl-[receptor-protein] + ATP = O-phospho-L-threonyl-[receptor-protein] + ADP + H(+). The catalysed reaction is L-seryl-[receptor-protein] + ATP = O-phospho-L-seryl-[receptor-protein] + ADP + H(+). Its activity is regulated as follows. Activin receptor type-2 (ACVR2A or ACVR2B) activates the type-1 receptor through phosphorylation of its regulatory GS domain. Its function is as follows. Transmembrane serine/threonine kinase activin type-1 receptor forming an activin receptor complex with activin receptor type-2 (ACVR2A or ACVR2B). Transduces the activin signal from the cell surface to the cytoplasm and is thus regulating a many physiological and pathological processes including neuronal differentiation and neuronal survival, hair follicle development and cycling, FSH production by the pituitary gland, wound healing, extracellular matrix production, immunosuppression and carcinogenesis. Activin is also thought to have a paracrine or autocrine role in follicular development in the ovary. Within the receptor complex, type-2 receptors (ACVR2A and/or ACVR2B) act as a primary activin receptors whereas the type-1 receptors like ACVR1B act as downstream transducers of activin signals. Activin binds to type-2 receptor at the plasma membrane and activates its serine-threonine kinase. The activated receptor type-2 then phosphorylates and activates the type-1 receptor such as ACVR1B. Once activated, the type-1 receptor binds and phosphorylates the SMAD proteins SMAD2 and SMAD3, on serine residues of the C-terminal tail. Soon after their association with the activin receptor and subsequent phosphorylation, SMAD2 and SMAD3 are released into the cytoplasm where they interact with the common partner SMAD4. This SMAD complex translocates into the nucleus where it mediates activin-induced transcription. Inhibitory SMAD7, which is recruited to ACVR1B through FKBP1A, can prevent the association of SMAD2 and SMAD3 with the activin receptor complex, thereby blocking the activin signal. Activin signal transduction is also antagonized by the binding to the receptor of inhibin-B via the IGSF1 inhibin coreceptor. ACVR1B also phosphorylates TDP2. The sequence is that of Activin receptor type-1B (Acvr1b) from Rattus norvegicus (Rat).